A 382-amino-acid chain; its full sequence is Dual-specificity RNA methyltransferase RlmN (382 aa).

E96 serves as the catalytic Proton acceptor. Residues 102-342 form the Radical SAM core domain; sequence QGKRGTLCVS…VRTTRGEDID (241 aa). A disulfide bridge connects residues C109 and C345. The [4Fe-4S] cluster site is built by C116, C120, and C123. S-adenosyl-L-methionine contacts are provided by residues 170–171, S202, 224–226, and N302; these read GE and SLH. Residue C345 is the S-methylcysteine intermediate of the active site.

Belongs to the radical SAM superfamily. RlmN family. [4Fe-4S] cluster is required as a cofactor.

The protein localises to the cytoplasm. It carries out the reaction adenosine(2503) in 23S rRNA + 2 reduced [2Fe-2S]-[ferredoxin] + 2 S-adenosyl-L-methionine = 2-methyladenosine(2503) in 23S rRNA + 5'-deoxyadenosine + L-methionine + 2 oxidized [2Fe-2S]-[ferredoxin] + S-adenosyl-L-homocysteine. The catalysed reaction is adenosine(37) in tRNA + 2 reduced [2Fe-2S]-[ferredoxin] + 2 S-adenosyl-L-methionine = 2-methyladenosine(37) in tRNA + 5'-deoxyadenosine + L-methionine + 2 oxidized [2Fe-2S]-[ferredoxin] + S-adenosyl-L-homocysteine. Its function is as follows. Specifically methylates position 2 of adenine 2503 in 23S rRNA and position 2 of adenine 37 in tRNAs. m2A2503 modification seems to play a crucial role in the proofreading step occurring at the peptidyl transferase center and thus would serve to optimize ribosomal fidelity. The chain is Dual-specificity RNA methyltransferase RlmN from Pseudomonas fluorescens (strain SBW25).